The following is a 460-amino-acid chain: Ribosomal protein uS12 methylthiotransferase RimO (460 aa).

Positions 16–130 (NKIHFISLGC…ILSAIESKEY (115 aa)) constitute an MTTase N-terminal domain. 6 residues coordinate [4Fe-4S] cluster: Cys25, Cys61, Cys93, Cys164, Cys168, and Cys171. Positions 150 to 382 (STPKHYAYLK…SQAQKQNVEK (233 aa)) constitute a Radical SAM core domain. In terms of domain architecture, TRAM spans 385-455 (QKLVGQVVEA…GYDLIGRVVK (71 aa)).

Belongs to the methylthiotransferase family. RimO subfamily. [4Fe-4S] cluster serves as cofactor.

The protein localises to the cytoplasm. The catalysed reaction is L-aspartate(89)-[ribosomal protein uS12]-hydrogen + (sulfur carrier)-SH + AH2 + 2 S-adenosyl-L-methionine = 3-methylsulfanyl-L-aspartate(89)-[ribosomal protein uS12]-hydrogen + (sulfur carrier)-H + 5'-deoxyadenosine + L-methionine + A + S-adenosyl-L-homocysteine + 2 H(+). Catalyzes the methylthiolation of an aspartic acid residue of ribosomal protein uS12. The sequence is that of Ribosomal protein uS12 methylthiotransferase RimO from Chlamydia felis (strain Fe/C-56) (Chlamydophila felis).